Here is a 362-residue protein sequence, read N- to C-terminus: Chromobox protein homolog 8 (362 aa).

Residues 11–69 (FAAEALLKRRIRKGRMEYLVKWKGWSQKYSTWEPEENILDARLLAAFEEREREMELYGP) enclose the Chromo domain. The span at 90–100 (KTYEFRSDSTR) shows a compositional bias: basic and acidic residues. The interval 90–197 (KTYEFRSDST…LGEPSAGLGE (108 aa)) is disordered. A Phosphoserine modification is found at S110. The segment covering 142-162 (DPPRDRDRERDRGTSRVDDKP) has biased composition (basic and acidic residues). Phosphoserine is present on residues S164 and S229. Position 234 is a phosphotyrosine (Y234). A phosphoserine mark is found at S238, S284, S305, and S325.

In terms of assembly, component of a PRC1-like complex. Interacts with RING1, RNF2, PCGF1, PCGF2, PCGF3, BMI1, PCGF5, PCGF6 and PHC2. Interacts with histone H3. Interacts with MLLT3. Interacts with PHC2. Interacts (via chromodomain) with single-stranded RNA.

It is found in the nucleus. Its subcellular location is the chromosome. Its function is as follows. Component of a Polycomb group (PcG) multiprotein PRC1-like complex, a complex class required to maintain the transcriptionally repressive state of many genes, including Hox genes, throughout development. PcG PRC1 complex acts via chromatin remodeling and modification of histones; it mediates monoubiquitination of histone H2A 'Lys-119', rendering chromatin heritably changed in its expressibility. The protein is Chromobox protein homolog 8 (Cbx8) of Mus musculus (Mouse).